The following is a 930-amino-acid chain: Probable SapB synthase (930 aa).

The 261-residue stretch at 256-516 folds into the Protein kinase domain; the sequence is YTVESALHFS…GSTRADETTR (261 aa). ATP-binding positions include 262 to 270 and Lys285; that span reads LHFSNGGGV. Asp395 (proton acceptor) is an active-site residue. Residues 447–467 form a helical membrane-spanning segment; it reads YALACLRIVLFLPLTSLLAVD. Residues 501-527 are compositionally biased toward basic and acidic residues; it reads GSTRVDGSTRADETTRADETTRLDVTT. 2 disordered regions span residues 501-558 and 911-930; these read GSTR…RDSM and PFLPPPRRSGGPLTRPHQEP. The segment covering 532-546 has biased composition (low complexity); the sequence is APDAARRPAGPVAPV. Residues 547-556 are compositionally biased toward basic and acidic residues; the sequence is RPDDWPRSRD.

This sequence in the N-terminal section; belongs to the protein kinase superfamily.

The protein resides in the cell membrane. Functionally, required for aerial hyphae formation. Probably involved in processing the precursor of SapB to its mature form. The sequence is that of Probable SapB synthase from Streptomyces coelicolor (strain ATCC BAA-471 / A3(2) / M145).